The chain runs to 319 residues: G-protein coupled receptor 55 (319 aa).

Over 1 to 21 (MSQQNTSGDCLFDGVNELMKT) the chain is Extracellular. The N-linked (GlcNAc...) asparagine glycan is linked to asparagine 5. The chain crosses the membrane as a helical span at residues 22–42 (LQFAVHIPTFVLGLLLNLLAI). The Cytoplasmic portion of the chain corresponds to 43-58 (HGFSTFLKNRWPDYAA). The chain crosses the membrane as a helical span at residues 59–79 (TSIYMINLAVFDLLLVLSLPF). At 80-94 (KMVLSQVQSPFPSLC) the chain is on the extracellular side. Residues 95–115 (TLVECLYFVSMYGSVFTICFI) form a helical membrane-spanning segment. Residues 116-137 (SMDRFLAIRYPLLVSHLRSPRK) lie on the Cytoplasmic side of the membrane. The chain crosses the membrane as a helical span at residues 138–158 (IFGICCTIWVLVWTGSIPIYS). Residues 159-180 (FHGKVEKYMCFHNMSDDTWSAK) lie on the Extracellular side of the membrane. Asparagine 171 carries an N-linked (GlcNAc...) asparagine glycan. A helical transmembrane segment spans residues 181–201 (VFFPLEVFGFLLPMGIMGFCC). The Cytoplasmic segment spans residues 202 to 231 (SRSIHILLGRRDHTQDWVQQKACIYSIAAS). Residues 232–252 (LAVFVVSFLPVHLGFFLQFLV) form a helical membrane-spanning segment. The Extracellular portion of the chain corresponds to 253–271 (RNSFIVECRAKQSISFFLQ). Residues 272–292 (LSMCFSNVNCCLDVFCYYFVI) traverse the membrane as a helical segment. Topologically, residues 293–319 (KEFRMNIRAHRPSRVQLVLQDTTISRG) are cytoplasmic.

This sequence belongs to the G-protein coupled receptor 1 family. In terms of tissue distribution, expressed in the caudate nucleus and putamen, but not detected in the hippocampus, thalamus, pons cerebellum, frontal cortex of the brain or in the liver. Expressed in osteoclasts and osteoblasts. Higly expressed in macrophages and B-cells.

It is found in the cell membrane. Functionally, G-protein coupled receptor that binds to several ligands including 2-arachidonoyl lysophosphatidylinositol or lysophosphatidylglucoside with high affinity, leading to rapid and transient activation of numerous intracellular signaling pathways. Induces the Ca(2+) release from intracellular stores via ERK, the heterotrimeric G protein GNA13 and RHOA leading to morphological changes including cell rounding and stress fiber formation. In macrophages, acts downstream of lysophosphatidylglucoside to inhibit the translocation of the phospholipid-transporting ABCA1 to plasma membrane and subsequent cholesterol efflux leading to lipid accumulation and foam cell formation. The chain is G-protein coupled receptor 55 (GPR55) from Homo sapiens (Human).